The chain runs to 292 residues: UTP--glucose-1-phosphate uridylyltransferase (292 aa).

The protein belongs to the UDPGP type 2 family. In terms of assembly, interacts with FloT.

The protein localises to the cell membrane. Its subcellular location is the membrane raft. The catalysed reaction is alpha-D-glucose 1-phosphate + UTP + H(+) = UDP-alpha-D-glucose + diphosphate. It participates in glycolipid metabolism; diglucosyl-diacylglycerol biosynthesis. In terms of biological role, catalyzes the formation of UDP-glucose from glucose-1-phosphate and UTP. This is an intermediate step in the biosynthesis of diglucosyl-diacylglycerol (Glc2-DAG), i.e. the predominant glycolipid found in B.subtilis membrane, which is also used as a membrane anchor for lipoteichoic acid (LTA). Has a role in the biosynthesis of all phosphate-containing envelope polymers, since UDP-glucose serves as a glucosyl donor not only for the biosynthesis of LTA but also for wall teichoic acids (WTAs). Is required for biofilm formation. This is likely due to another role of UDP-glucose, which might also act as a metabolic signal regulating biofilm formation or may be involved in some unknown biosynthetic pathway essential for biofilm formation, e.g. the synthesis of an exopolysaccharide. This Bacillus subtilis (strain 168) protein is UTP--glucose-1-phosphate uridylyltransferase (gtaB).